The chain runs to 366 residues: MNKILLYCRQGFEKECAAEITAKAAEREIFGFARVKDDSAYVLFECYQQGEAEKLLAELPFSELIFSRQMIVVGELLRDLPPTNRITPVVGMLTGVVEKGGDLRVEVPDTNASKELLKFCRKFTVPLRASLRKDGILLNFESAKRPVVHVFFIASGCCYVGYSLPANNSPLFMGIPRLKFPSDAPSRSTLKLEEAFHVFIPADEWDERLASGMWAVDLGACPGGWTYQLVQRSMMVNAVDNGPMAPSLMDTGQVFHQREDGFKYRPTRNNNYWVVCDMVEKPVRVANLMADWLVNGWCREAIFNLKLPMKKRYEEVAQNLAMIHEKLAQNGINAQIQARQLYHDREEVTVHIRRVWSATPGRRDER.

Residues Ser188, 221-224 (CPGG), Asp240, Asp260, and Asp277 each bind S-adenosyl-L-methionine. The active-site Proton acceptor is Lys306.

The protein belongs to the class I-like SAM-binding methyltransferase superfamily. RNA methyltransferase RlmE family. RlmM subfamily. Monomer.

The protein localises to the cytoplasm. The enzyme catalyses cytidine(2498) in 23S rRNA + S-adenosyl-L-methionine = 2'-O-methylcytidine(2498) in 23S rRNA + S-adenosyl-L-homocysteine + H(+). Its function is as follows. Catalyzes the 2'-O-methylation at nucleotide C2498 in 23S rRNA. The protein is Ribosomal RNA large subunit methyltransferase M of Erwinia tasmaniensis (strain DSM 17950 / CFBP 7177 / CIP 109463 / NCPPB 4357 / Et1/99).